The primary structure comprises 387 residues: (S)-8-oxocitronellyl enol synthase (387 aa).

NADP(+)-binding positions include 36 to 38 (TGI), 64 to 65 (RR), 82 to 83 (DI), 106 to 107 (SW), and Gln140. Catalysis depends on residues Lys144 and Tyr177. Substrate-binding residues include Lys144 and Tyr177. NADP(+) contacts are provided by residues Tyr177 and 211 to 213 (SMM).

The protein belongs to the short-chain dehydrogenases/reductases (SDR) family. Highly divergent. Expressed in leaves.

The enzyme catalyses (S)-8-oxocitronellyl enol + NADP(+) = (6E)-8-oxogeranial + NADPH + H(+). The catalysed reaction is (S)-8-oxocitronellyl enol + NAD(+) = (6E)-8-oxogeranial + NADH + H(+). It carries out the reaction (R)-8-oxocitronellyl enol + NADP(+) = (6E)-8-oxogeranial + NADPH + H(+). Functionally, iridoid synthase that catalyzes the first step in generation of the iridoid ring scaffold using the linear monoterpene (6E)-8-oxogeranial as substrate. Reduces 8-oxogeranial, generating an unstable product that is subsequently cyclized into several possible products, either non-enzymically or by dedicated cyclases. Iridoids comprise a large family of distinctive bicyclic monoterpenes that possess a wide range of pharmacological activities, including anticancer, anti-inflammatory, antifungal and antibacterial activities. This is (S)-8-oxocitronellyl enol synthase from Antirrhinum majus (Garden snapdragon).